A 404-amino-acid polypeptide reads, in one-letter code: Demethylphylloquinone reductase NdbB (404 aa).

7–43 (RICILGGGFGGLYTALRLGQLSWEGHTPPEIVLVDQR) provides a ligand contact to FAD. Residue 159–195 (IRIAIVGGGYSGVELAAKLGDRLGERGRIRIIERGKE) participates in NADP(+) binding.

Belongs to the NADH dehydrogenase family. It depends on FAD as a cofactor.

It catalyses the reaction demethylphylloquinone + NADPH + H(+) = demethylphylloquinol + NADP(+). It participates in cofactor biosynthesis; phylloquinone biosynthesis. Inhibited by dicumarol. Its function is as follows. Bifunctional oxidoreductase probably ables to act both on prenyl naphthoquinones and on prenyl benzoquinones. Catalyzes the penultimate step in the biosynthesis of vitamin K1. This is Demethylphylloquinone reductase NdbB from Synechocystis sp. (strain ATCC 27184 / PCC 6803 / Kazusa).